The chain runs to 481 residues: Long chain base biosynthesis protein 1b (481 aa).

Residues 32 to 52 (FGIHIDGHLVVEGLLIAAILF) traverse the membrane as a helical segment.

It belongs to the class-II pyridoxal-phosphate-dependent aminotransferase family. Heterodimer with LCB2. Component of the serine palmitoyltransferase (SPT) complex, composed of LCB1 and LCB2. Pyridoxal 5'-phosphate is required as a cofactor.

Its subcellular location is the endoplasmic reticulum membrane. The enzyme catalyses L-serine + hexadecanoyl-CoA + H(+) = 3-oxosphinganine + CO2 + CoA. It functions in the pathway lipid metabolism; sphingolipid metabolism. Functionally, serine palmitoyltransferase (SPT). The heterodimer formed with LCB2 constitutes the catalytic core. The sequence is that of Long chain base biosynthesis protein 1b from Oryza sativa subsp. japonica (Rice).